An 823-amino-acid polypeptide reads, in one-letter code: Leucine--tRNA ligase (823 aa).

Residues 42–52 (PYPSGTLHMGH) carry the 'HIGH' region motif. The 'KMSKS' region motif lies at 575 to 579 (KMSKS). Lys-578 provides a ligand contact to ATP.

It belongs to the class-I aminoacyl-tRNA synthetase family.

The protein localises to the cytoplasm. The enzyme catalyses tRNA(Leu) + L-leucine + ATP = L-leucyl-tRNA(Leu) + AMP + diphosphate. The polypeptide is Leucine--tRNA ligase (Legionella pneumophila (strain Corby)).